The primary structure comprises 264 residues: Rhodanese-like domain-containing protein 4A, chloroplastic (264 aa).

The transit peptide at Met-1 to Leu-60 directs the protein to the chloroplast. Residues Phe-95–Leu-115 traverse the membrane as a helical segment. In terms of domain architecture, Rhodanese spans Asn-132–Ile-232.

The protein resides in the plastid. The protein localises to the chloroplast. It is found in the membrane. The chain is Rhodanese-like domain-containing protein 4A, chloroplastic (STR4A) from Arabidopsis thaliana (Mouse-ear cress).